A 3953-amino-acid chain; its full sequence is Zinc finger protein 469 (3953 aa).

Disordered regions lie at residues 1–274 (MPGE…VSFQ), 313–465 (WPEE…MFFN), 512–672 (EWQG…FPFP), 763–784 (GHQRSPGPPGLPSPPAAPRVPA), 869–1383 (ADEE…HSEL), 1400–1461 (PKPS…DLPV), 1575–1610 (LQRSKDTRGAPRELAEAESVGRVELGTGTEPPSQRR), 1703–1864 (SKTG…GASS), 1884–1947 (VSNT…TVEG), 1991–2030 (KTQGQGTANQLQPENGVSPGGTDNHASVNASPKTALTGPT), 2070–2700 (LTAA…TLGP), 2716–2915 (AGET…LSDS), 3001–3036 (EMPAPADDSSSSLGDVSPEPPSLERERCDGGLPGNT), and 3072–3110 (GPSFLDFEGTASSQGPQSRRTEEAAGAGRAQGRGRPAKG). Polar residues predominate over residues 187–198 (PPSSFTSTNYTS). Pro residues-rich tracts occupy residues 202-211 (TPRPPAPGPP) and 324-335 (YPLPTQPAPSPL). Over residues 603–623 (STCSSLSPMSSSPANPSSEES) the composition is skewed to low complexity. Pro residues-rich tracts occupy residues 768–780 (PGPPGLPSPPAAP) and 896–911 (KAPPPLPAATPDPQTP). Over residues 944–953 (QQRRGKQLKL) the composition is skewed to basic residues. Positions 963–975 (AAEGSGSGGGGRA) are enriched in gly residues. A compositionally biased stretch (basic and acidic residues) spans 981-991 (RRNDGLGERPP). The segment covering 1005–1017 (RADPAPRVPRAAA) has biased composition (low complexity). 2 stretches are compositionally biased toward basic residues: residues 1025–1042 (SRRRRLPPRKDPRKRKAR) and 1058–1070 (KNRRHRRLGRRAG). Residues 1082 to 1093 (PGAEDRRLREYD) show a composition bias toward basic and acidic residues. Acidic residues predominate over residues 1094–1103 (FASESEEDEQ). The segment covering 1120–1137 (KRKEVELTQGPREDEPQK) has biased composition (basic and acidic residues). Low complexity predominate over residues 1158–1177 (PGGSRPGPGRSPQARGPSRS). A compositionally biased stretch (basic and acidic residues) spans 1213–1229 (EETRPSLDFPQEAKEPE). Polar residues-rich tracts occupy residues 1278-1290 (PKPSGSLANTAPH) and 1333-1350 (NPSSTACPKPSVLSSKIS). The span at 1577–1595 (RSKDTRGAPRELAEAESVG) shows a compositional bias: basic and acidic residues. 2 stretches are compositionally biased toward polar residues: residues 1991-2005 (KTQGQGTANQLQPEN) and 2014-2024 (NHASVNASPKT). Over residues 2243-2262 (DTPKDSTLRIPEDSRKEKLW) the composition is skewed to basic and acidic residues. The segment covering 2409–2435 (TAPSSTASDFQSDSPQSHRNASHQTPQ) has biased composition (polar residues). The C2H2-type 1 zinc finger occupies 2472-2498 (VTCEVCAASFRSGPGLSRHKARKHRPH). The span at 2488 to 2498 (SRHKARKHRPH) shows a compositional bias: basic residues. Low complexity predominate over residues 2506-2521 (SPAALPAQQPLEPLAQ). The span at 2534–2546 (SGKERPNHSRGDP) shows a compositional bias: basic and acidic residues. Low complexity predominate over residues 2565 to 2574 (PGSPHSQQLH). The span at 2592 to 2631 (PRPDQAREDELHPKQAEKREGRRWRREPTVDSPSHSEGKS) shows a compositional bias: basic and acidic residues. Positions 2632–2642 (NKKRGKLRGRR) are enriched in basic residues. Residues 2664–2676 (PSPAMASYAASPS) show a composition bias toward low complexity. The span at 2777–2787 (DSSRAHSRSEE) shows a compositional bias: basic and acidic residues. Positions 2805–2816 (TSSSPADSTTSS) are enriched in low complexity. A compositionally biased stretch (basic residues) spans 2869-2879 (LTRKRNPHVYG). Residues 3095–3105 (AAGAGRAQGRG) are compositionally biased toward low complexity. The C2H2-type 2 zinc-finger motif lies at 3115 to 3137 (YKCKVCFQRFRSLGELDLHKLAH). The segment at 3232-3322 (TEPAPKHHRG…PDPWAGGEPL (91 aa)) is disordered. Positions 3260 to 3272 (GEAKKDSPGERAK) are enriched in basic and acidic residues. Over residues 3302 to 3314 (PGPPRTTPSPSPD) the composition is skewed to pro residues. 2 C2H2-type zinc fingers span residues 3337 to 3359 (RDCHHCGKRFPKPFKLQRHLAVH) and 3365 to 3388 (YLCPRCPRVYPEHGELLAHLGGAH). Residues 3418–3442 (FACSSCNYTFAKKEQFDRHMNKHLR) form a C2H2-type 5; degenerate zinc finger. Disordered stretches follow at residues 3448-3501 (FAFR…PILS), 3518-3559 (STTK…SPFP), and 3576-3925 (ERPE…HRTA). The segment covering 3584–3602 (PGSPGPLLQQALPLGASLP) has biased composition (low complexity). Over residues 3633 to 3651 (CAPDHFQEDHLLQKEKEVS) the composition is skewed to basic and acidic residues. Composition is skewed to low complexity over residues 3728 to 3741 (PGPSSQGSGSPRPG) and 3749 to 3759 (QPQPASGQLQS). Basic and acidic residues-rich tracts occupy residues 3876 to 3892 (EQRKAEPGHTQRKDRLG) and 3915 to 3925 (EPAEPHTHRTA).

This sequence belongs to the krueppel C2H2-type zinc-finger protein family. Detected in cornea, sclera, skin fibroblasts and striated muscle.

The protein localises to the nucleus. Its function is as follows. May be involved in transcriptional regulation. This Homo sapiens (Human) protein is Zinc finger protein 469 (ZNF469).